The following is a 187-amino-acid chain: Cytochrome c oxidase assembly protein CtaG (187 aa).

Residues 1 to 9 (MSKKSNKNL) lie on the Cytoplasmic side of the membrane. The chain crosses the membrane as a helical; Signal-anchor for type II membrane protein span at residues 10-30 (AFSLLGLIISMVLLSFASVPI). Topologically, residues 31-187 (YNLFCKVTGY…IASLRGNTKY (157 aa)) are periplasmic.

It belongs to the COX11/CtaG family.

Its subcellular location is the cell inner membrane. In terms of biological role, exerts its effect at some terminal stage of cytochrome c oxidase synthesis, probably by being involved in the insertion of the copper B into subunit I. The polypeptide is Cytochrome c oxidase assembly protein CtaG (Rickettsia felis (strain ATCC VR-1525 / URRWXCal2) (Rickettsia azadi)).